A 332-amino-acid chain; its full sequence is Protein phosphatase PTC7 homolog fig (332 aa).

In terms of domain architecture, PPM-type phosphatase spans 70 to 325 (KPCSPRERAN…DDITLILASV (256 aa)). Mn(2+)-binding residues include Asp102, Gly103, and Asp247.

It belongs to the PP2C family. It depends on Mg(2+) as a cofactor. Requires Mn(2+) as cofactor.

It carries out the reaction O-phospho-L-seryl-[protein] + H2O = L-seryl-[protein] + phosphate. The enzyme catalyses O-phospho-L-threonyl-[protein] + H2O = L-threonyl-[protein] + phosphate. This Drosophila ananassae (Fruit fly) protein is Protein phosphatase PTC7 homolog fig.